Here is a 368-residue protein sequence, read N- to C-terminus: Quinolinate synthase (368 aa).

2 residues coordinate iminosuccinate: His-46 and Ser-63. Cys-110 provides a ligand contact to [4Fe-4S] cluster. Iminosuccinate is bound by residues 141–143 (YVN) and Ser-162. Cys-230 is a [4Fe-4S] cluster binding site. Residues 256–258 (HPE) and Thr-273 each bind iminosuccinate. Cys-320 provides a ligand contact to [4Fe-4S] cluster.

It belongs to the quinolinate synthase family. Type 3 subfamily. [4Fe-4S] cluster is required as a cofactor.

The protein localises to the cytoplasm. It carries out the reaction iminosuccinate + dihydroxyacetone phosphate = quinolinate + phosphate + 2 H2O + H(+). It participates in cofactor biosynthesis; NAD(+) biosynthesis; quinolinate from iminoaspartate: step 1/1. Catalyzes the condensation of iminoaspartate with dihydroxyacetone phosphate to form quinolinate. The chain is Quinolinate synthase from Bacillus cereus (strain ZK / E33L).